The chain runs to 480 residues: Uronate isomerase (480 aa).

The protein belongs to the metallo-dependent hydrolases superfamily. Uronate isomerase family.

It carries out the reaction D-glucuronate = D-fructuronate. The catalysed reaction is aldehydo-D-galacturonate = keto-D-tagaturonate. It participates in carbohydrate metabolism; pentose and glucuronate interconversion. In Phenylobacterium zucineum (strain HLK1), this protein is Uronate isomerase.